Reading from the N-terminus, the 141-residue chain is Hemoglobin subunit alpha-D (141 aa).

Residues 1 to 141 (MLTADDKKLI…VAAVLAEKYR (141 aa)) form the Globin domain. Heme b is bound by residues histidine 58 and histidine 87.

The protein belongs to the globin family. As to quaternary structure, heterotetramer of two alpha-D chains and two beta chains. As to expression, red blood cells.

In terms of biological role, involved in oxygen transport from the lung to the various peripheral tissues. This Aegypius monachus (Cinereous vulture) protein is Hemoglobin subunit alpha-D (HBAD).